The sequence spans 241 residues: Uridylate kinase (241 aa).

ATP is bound at residue 12-15; it reads KISG. The segment at 20–25 is involved in allosteric activation by GTP; the sequence is GDKGNG. Glycine 54 lines the UMP pocket. 2 residues coordinate ATP: glycine 55 and arginine 59. Residues aspartate 74 and 135-142 contribute to the UMP site; that span reads TGNPYFST. Residues asparagine 163, tyrosine 169, and aspartate 172 each contribute to the ATP site.

The protein belongs to the UMP kinase family. In terms of assembly, homohexamer.

The protein resides in the cytoplasm. The catalysed reaction is UMP + ATP = UDP + ADP. Its pathway is pyrimidine metabolism; CTP biosynthesis via de novo pathway; UDP from UMP (UMPK route): step 1/1. With respect to regulation, allosterically activated by GTP. Inhibited by UTP. Catalyzes the reversible phosphorylation of UMP to UDP. In Lactobacillus acidophilus (strain ATCC 700396 / NCK56 / N2 / NCFM), this protein is Uridylate kinase.